A 526-amino-acid chain; its full sequence is Peptide chain release factor 3 (526 aa).

Residues 9–277 form the tr-type G domain; sequence NKRRTFAIIS…DFVEYAPGPQ (269 aa). GTP-binding positions include 18 to 25, 86 to 90, and 140 to 143; these read SHPDAGKT, DTPGH, and NKLD.

This sequence belongs to the TRAFAC class translation factor GTPase superfamily. Classic translation factor GTPase family. PrfC subfamily.

It is found in the cytoplasm. Increases the formation of ribosomal termination complexes and stimulates activities of RF-1 and RF-2. It binds guanine nucleotides and has strong preference for UGA stop codons. It may interact directly with the ribosome. The stimulation of RF-1 and RF-2 is significantly reduced by GTP and GDP, but not by GMP. The polypeptide is Peptide chain release factor 3 (Legionella pneumophila (strain Corby)).